The sequence spans 212 residues: Uracil phosphoribosyltransferase (212 aa).

5-phospho-alpha-D-ribose 1-diphosphate-binding positions include R78, R103, and 130-138 (DPMLATGGS). Residues I193 and 198–200 (GDA) each bind uracil. 5-phospho-alpha-D-ribose 1-diphosphate is bound at residue D199.

The protein belongs to the UPRTase family. Mg(2+) serves as cofactor.

It catalyses the reaction UMP + diphosphate = 5-phospho-alpha-D-ribose 1-diphosphate + uracil. The protein operates within pyrimidine metabolism; UMP biosynthesis via salvage pathway; UMP from uracil: step 1/1. Allosterically activated by GTP. Its function is as follows. Catalyzes the conversion of uracil and 5-phospho-alpha-D-ribose 1-diphosphate (PRPP) to UMP and diphosphate. The chain is Uracil phosphoribosyltransferase from Pseudomonas putida (strain ATCC 700007 / DSM 6899 / JCM 31910 / BCRC 17059 / LMG 24140 / F1).